A 155-amino-acid chain; its full sequence is Ribonuclease H (155 aa).

The 143-residue stretch at 1-143 (MNQVEIYTDG…ADALANRGVD (143 aa)) folds into the RNase H type-1 domain. Positions 9, 47, 69, and 135 each coordinate Mg(2+).

This sequence belongs to the RNase H family. As to quaternary structure, monomer. Mg(2+) serves as cofactor.

It is found in the cytoplasm. The catalysed reaction is Endonucleolytic cleavage to 5'-phosphomonoester.. Its function is as follows. Endonuclease that specifically degrades the RNA of RNA-DNA hybrids. The protein is Ribonuclease H of Verminephrobacter eiseniae (strain EF01-2).